The primary structure comprises 93 residues: Exodeoxyribonuclease 7 small subunit (93 aa).

Residues 1–22 are disordered; the sequence is MAKTASPGATPPGNGAEPLPDN.

This sequence belongs to the XseB family. As to quaternary structure, heterooligomer composed of large and small subunits.

The protein resides in the cytoplasm. It carries out the reaction Exonucleolytic cleavage in either 5'- to 3'- or 3'- to 5'-direction to yield nucleoside 5'-phosphates.. Its function is as follows. Bidirectionally degrades single-stranded DNA into large acid-insoluble oligonucleotides, which are then degraded further into small acid-soluble oligonucleotides. In Burkholderia multivorans (strain ATCC 17616 / 249), this protein is Exodeoxyribonuclease 7 small subunit.